We begin with the raw amino-acid sequence, 172 residues long: Large ribosomal subunit protein uL10 (172 aa).

This sequence belongs to the universal ribosomal protein uL10 family. Part of the ribosomal stalk of the 50S ribosomal subunit. The N-terminus interacts with L11 and the large rRNA to form the base of the stalk. The C-terminus forms an elongated spine to which L12 dimers bind in a sequential fashion forming a multimeric L10(L12)X complex.

In terms of biological role, forms part of the ribosomal stalk, playing a central role in the interaction of the ribosome with GTP-bound translation factors. In Leifsonia xyli subsp. xyli (strain CTCB07), this protein is Large ribosomal subunit protein uL10.